The primary structure comprises 295 residues: MDEREALIKAGEIARQVKKEVVDLIKPGAKLYDIAEFVERRIVELGGKPAFPCNLSINEIAAHYTPYKGDGTVLKEGDYLKLDIGVHVDGYIADTAVTFRVGMEEDELMEAAREALENAIATVRAGVMIRDVARAIEETIRGKGFNPIVNLSGHKVERYKLHAGVSVPNVYREADTYVLQEGDVFAIEPFATTGAGQVIEVPPALIFMYLRDRPVRMLQARRLLMHIKKNYKTLPFAYRWLQDFLPEGQLKLALAQLEKAGAIYAYPILREVRGGMVAQFEHTVIVEKEGAYITT.

His63 lines the substrate pocket. 3 residues coordinate a divalent metal cation: Asp83, Asp94, and His154. His162 is a substrate binding site. A divalent metal cation is bound by residues Glu188 and Glu281.

The protein belongs to the peptidase M24A family. Methionine aminopeptidase archaeal type 2 subfamily. Monomer. Co(2+) is required as a cofactor. It depends on Zn(2+) as a cofactor. Requires Mn(2+) as cofactor. The cofactor is Fe(2+).

It carries out the reaction Release of N-terminal amino acids, preferentially methionine, from peptides and arylamides.. Removes the N-terminal methionine from nascent proteins. The N-terminal methionine is often cleaved when the second residue in the primary sequence is small and uncharged (Met-Ala-, Cys, Gly, Pro, Ser, Thr, or Val). The sequence is that of Methionine aminopeptidase from Thermococcus kodakarensis (strain ATCC BAA-918 / JCM 12380 / KOD1) (Pyrococcus kodakaraensis (strain KOD1)).